We begin with the raw amino-acid sequence, 397 residues long: Elongation factor Tu (397 aa).

In terms of domain architecture, tr-type G spans lysine 10–glutamate 206. The segment at glycine 19 to threonine 26 is G1. Glycine 19–threonine 26 is a binding site for GTP. Residue threonine 26 coordinates Mg(2+). Residues glycine 62–glutamine 66 form a G2 region. The segment at aspartate 83–glycine 86 is G3. Residues aspartate 83–histidine 87 and asparagine 138–aspartate 141 each bind GTP. Residues asparagine 138–aspartate 141 are G4. Positions serine 176–leucine 178 are G5.

The protein belongs to the TRAFAC class translation factor GTPase superfamily. Classic translation factor GTPase family. EF-Tu/EF-1A subfamily. As to quaternary structure, monomer.

The protein localises to the cytoplasm. The catalysed reaction is GTP + H2O = GDP + phosphate + H(+). Functionally, GTP hydrolase that promotes the GTP-dependent binding of aminoacyl-tRNA to the A-site of ribosomes during protein biosynthesis. In Saccharopolyspora erythraea (strain ATCC 11635 / DSM 40517 / JCM 4748 / NBRC 13426 / NCIMB 8594 / NRRL 2338), this protein is Elongation factor Tu.